A 122-amino-acid chain; its full sequence is Large ribosomal subunit protein uL14c (122 aa).

Belongs to the universal ribosomal protein uL14 family. As to quaternary structure, part of the 50S ribosomal subunit.

Its subcellular location is the plastid. The protein localises to the chloroplast. Its function is as follows. Binds to 23S rRNA. This Pleurastrum terricola (Filamentous green alga) protein is Large ribosomal subunit protein uL14c.